The primary structure comprises 204 residues: Holliday junction branch migration complex subunit RuvA (204 aa).

A domain I region spans residues Met-1 to Cys-64. A domain II region spans residues Thr-65–Phe-143. The flexible linker stretch occupies residues Ile-144–Ser-154. Positions Ser-154–Met-204 are domain III.

This sequence belongs to the RuvA family. As to quaternary structure, homotetramer. Forms an RuvA(8)-RuvB(12)-Holliday junction (HJ) complex. HJ DNA is sandwiched between 2 RuvA tetramers; dsDNA enters through RuvA and exits via RuvB. An RuvB hexamer assembles on each DNA strand where it exits the tetramer. Each RuvB hexamer is contacted by two RuvA subunits (via domain III) on 2 adjacent RuvB subunits; this complex drives branch migration. In the full resolvosome a probable DNA-RuvA(4)-RuvB(12)-RuvC(2) complex forms which resolves the HJ.

It is found in the cytoplasm. Its function is as follows. The RuvA-RuvB-RuvC complex processes Holliday junction (HJ) DNA during genetic recombination and DNA repair, while the RuvA-RuvB complex plays an important role in the rescue of blocked DNA replication forks via replication fork reversal (RFR). RuvA specifically binds to HJ cruciform DNA, conferring on it an open structure. The RuvB hexamer acts as an ATP-dependent pump, pulling dsDNA into and through the RuvAB complex. HJ branch migration allows RuvC to scan DNA until it finds its consensus sequence, where it cleaves and resolves the cruciform DNA. This Syntrophus aciditrophicus (strain SB) protein is Holliday junction branch migration complex subunit RuvA.